The chain runs to 205 residues: UPF0637 protein OB1420 (205 aa).

Belongs to the UPF0637 family.

This is UPF0637 protein OB1420 from Oceanobacillus iheyensis (strain DSM 14371 / CIP 107618 / JCM 11309 / KCTC 3954 / HTE831).